The primary structure comprises 140 residues: 3-hydroxyacyl-[acyl-carrier-protein] dehydratase FabZ (140 aa).

His48 is a catalytic residue.

Belongs to the thioester dehydratase family. FabZ subfamily.

The protein resides in the cytoplasm. It carries out the reaction a (3R)-hydroxyacyl-[ACP] = a (2E)-enoyl-[ACP] + H2O. Its function is as follows. Involved in unsaturated fatty acids biosynthesis. Catalyzes the dehydration of short chain beta-hydroxyacyl-ACPs and long chain saturated and unsaturated beta-hydroxyacyl-ACPs. This chain is 3-hydroxyacyl-[acyl-carrier-protein] dehydratase FabZ, found in Latilactobacillus sakei subsp. sakei (strain 23K) (Lactobacillus sakei subsp. sakei).